The primary structure comprises 328 residues: Malate dehydrogenase (328 aa).

11–17 (GAAGQIG) contributes to the NAD(+) binding site. 2 residues coordinate substrate: R94 and R100. NAD(+) contacts are provided by residues N107, Q114, and 131 to 133 (VGN). Residues N133 and R164 each contribute to the substrate site. The active-site Proton acceptor is the H189.

The protein belongs to the LDH/MDH superfamily. MDH type 2 family.

It carries out the reaction (S)-malate + NAD(+) = oxaloacetate + NADH + H(+). Catalyzes the reversible oxidation of malate to oxaloacetate. The protein is Malate dehydrogenase of Acinetobacter baumannii (strain SDF).